The chain runs to 435 residues: uncharacterized protein (435 aa).

WD repeat units lie at residues 105–149 (DLEY…GIDS), 164–204 (HNNA…SKTQ), and 207–247 (AHDK…HSTI). Phosphoserine is present on Ser-266. The WD 4 repeat unit spans residues 313 to 353 (GHKGDVNAVKWMPGSKSKLATCGDDCVVSLWDLDQPVNPSP). The tract at residues 352–371 (SPAPTLSVSGTTPGMTGSTS) is disordered. Residues 358-371 (SVSGTTPGMTGSTS) show a composition bias toward low complexity. Ser-388 carries the phosphoserine modification.

Its subcellular location is the cytoplasm. It is found in the golgi apparatus. This is an uncharacterized protein from Schizosaccharomyces pombe (strain 972 / ATCC 24843) (Fission yeast).